A 339-amino-acid polypeptide reads, in one-letter code: Transcription initiation factor IIB (339 aa).

The TFIIB-type zinc-finger motif lies at 39–70 (EELICPVCGSKSIIKDYERAEIVCEMCGCVLQ). Positions 43, 46, 62, and 65 each coordinate Zn(2+). 2 tandem repeats follow at residues 156 to 239 (SELD…SREL) and 250 to 331 (DYVP…ELTE).

Belongs to the TFIIB family.

In terms of biological role, stabilizes TBP binding to an archaeal box-A promoter. Also responsible for recruiting RNA polymerase II to the pre-initiation complex (DNA-TBP-TFIIB). The sequence is that of Transcription initiation factor IIB from Methanococcus maripaludis (strain DSM 14266 / JCM 13030 / NBRC 101832 / S2 / LL).